Consider the following 223-residue polypeptide: 26S proteasome non-ATPase regulatory subunit 9 (223 aa).

Basic and acidic residues predominate over residues 103–121; sequence RDKEKQARDMAEAHKEAMS. The disordered stretch occupies residues 103-141; the sequence is RDKEKQARDMAEAHKEAMSRKLGQSESQGPPRAFAKVNS. Residues 108 to 195 form the PDZ domain; the sequence is QARDMAEAHK…KPLNVTVIRR (88 aa). Residue Ser129 is modified to Phosphoserine.

Belongs to the proteasome subunit p27 family. Interacts with PSMC3. Part of a transient complex (modulator) containing PSMD9, PSMC6 and PSMC3 formed during the assembly of the 26S proteasome. As to expression, expressed in all tissues tested, highly expressed in liver and kidney.

Its function is as follows. Acts as a chaperone during the assembly of the 26S proteasome, specifically of the base subcomplex of the PA700/19S regulatory complex (RC). During the base subcomplex assembly is part of an intermediate PSMD9:PSMC6:PSMC3 module, also known as modulator trimer complex; PSMD9 is released during the further base assembly process. The chain is 26S proteasome non-ATPase regulatory subunit 9 (PSMD9) from Homo sapiens (Human).